The chain runs to 57 residues: Three-finger toxin Tschuditoxin-I (57 aa).

3 disulfides stabilise this stretch: C3–C22, C17–C39, and C41–C52.

In terms of tissue distribution, expressed by the venom gland.

It is found in the secreted. Its function is as follows. Produces peripheral paralysis by blocking neuromuscular transmission at the postsynaptic site. Binds to and inhibits the endogenous nicotinic acetylcholine receptors (nAChR). This neurotoxin is lethal to mice by intraperitoneal or intravenous injection. In Micrurus tschudii (Desert coral snake), this protein is Three-finger toxin Tschuditoxin-I.